Reading from the N-terminus, the 489-residue chain is Glutamate--tRNA ligase (489 aa).

Residues 10 to 20 (PSPTGFLHIGG) carry the 'HIGH' region motif. Residues 261–265 (KLSKR) carry the 'KMSKS' region motif. Lysine 264 is an ATP binding site.

The protein belongs to the class-I aminoacyl-tRNA synthetase family. Glutamate--tRNA ligase type 1 subfamily. As to quaternary structure, monomer.

It localises to the cytoplasm. The enzyme catalyses tRNA(Glu) + L-glutamate + ATP = L-glutamyl-tRNA(Glu) + AMP + diphosphate. Functionally, catalyzes the attachment of glutamate to tRNA(Glu) in a two-step reaction: glutamate is first activated by ATP to form Glu-AMP and then transferred to the acceptor end of tRNA(Glu). In Finegoldia magna (strain ATCC 29328 / DSM 20472 / WAL 2508) (Peptostreptococcus magnus), this protein is Glutamate--tRNA ligase.